Reading from the N-terminus, the 880-residue chain is Alanine--tRNA ligase (880 aa).

Zn(2+) contacts are provided by His566, His570, Cys668, and His672.

The protein belongs to the class-II aminoacyl-tRNA synthetase family. Zn(2+) serves as cofactor.

The protein resides in the cytoplasm. It catalyses the reaction tRNA(Ala) + L-alanine + ATP = L-alanyl-tRNA(Ala) + AMP + diphosphate. Functionally, catalyzes the attachment of alanine to tRNA(Ala) in a two-step reaction: alanine is first activated by ATP to form Ala-AMP and then transferred to the acceptor end of tRNA(Ala). Also edits incorrectly charged Ser-tRNA(Ala) and Gly-tRNA(Ala) via its editing domain. This is Alanine--tRNA ligase from Trichormus variabilis (strain ATCC 29413 / PCC 7937) (Anabaena variabilis).